The chain runs to 689 residues: UvrABC system protein B (689 aa).

The segment at 1-26 (MSDASGPLQPDRPEADVPFRVEAPFD) is disordered. The Helicase ATP-binding domain occupies 40–422 (AGYEQGAQQQ…ERAQSANVVE (383 aa)). 53–60 (GVTGSGKT) contacts ATP. Positions 106-129 (YYNYYQPEAYVEQTDKYIEKDASI) match the Beta-hairpin motif. The Helicase C-terminal domain occupies 443–605 (QVEDLMDRID…TTPTTIEKAV (163 aa)). Residues 632–667 (ALLVEDLEARMEDAASNLEFELAADIRDRMRELREA) form the UVR domain. Residues 668 to 689 (FDLDGGDAPEDPGGVAPETEDW) form a disordered region.

This sequence belongs to the UvrB family. In terms of assembly, forms a heterotetramer with UvrA during the search for lesions. Interacts with UvrC in an incision complex.

It localises to the cytoplasm. Its function is as follows. The UvrABC repair system catalyzes the recognition and processing of DNA lesions. A damage recognition complex composed of 2 UvrA and 2 UvrB subunits scans DNA for abnormalities. Upon binding of the UvrA(2)B(2) complex to a putative damaged site, the DNA wraps around one UvrB monomer. DNA wrap is dependent on ATP binding by UvrB and probably causes local melting of the DNA helix, facilitating insertion of UvrB beta-hairpin between the DNA strands. Then UvrB probes one DNA strand for the presence of a lesion. If a lesion is found the UvrA subunits dissociate and the UvrB-DNA preincision complex is formed. This complex is subsequently bound by UvrC and the second UvrB is released. If no lesion is found, the DNA wraps around the other UvrB subunit that will check the other stand for damage. This Halobacterium salinarum (strain ATCC 700922 / JCM 11081 / NRC-1) (Halobacterium halobium) protein is UvrABC system protein B.